The following is a 31-amino-acid chain: MTITEKFYDKELKRIVEDVFRFEIEMHGYEF.

This is an uncharacterized protein from Archaeoglobus fulgidus (strain ATCC 49558 / DSM 4304 / JCM 9628 / NBRC 100126 / VC-16).